Here is a 321-residue protein sequence, read N- to C-terminus: NADPH-dependent codeinone reductase 1-5 (321 aa).

2 residues coordinate NADPH: threonine 27 and aspartate 51. Active-site proton donor residues include tyrosine 56 and histidine 119. Histidine 119 provides a ligand contact to substrate. Residues glutamine 187, serine 214, leucine 216, serine 264, and arginine 269 each coordinate NADPH.

This sequence belongs to the aldo/keto reductase family. Latex secreting cells (laticifer cells). Expressed constitutively and ubiquitously with highest levels in capsules.

It is found in the cytoplasm. The protein resides in the cytosol. It carries out the reaction codeine + NADP(+) = codeinone + NADPH + H(+). The enzyme catalyses neopine + NADP(+) = neopinone + NADPH + H(+). The catalysed reaction is morphine + NADP(+) = morphinone + NADPH + H(+). It catalyses the reaction neomorphine + NADP(+) = neomorphinone + NADPH + H(+). It functions in the pathway alkaloid biosynthesis; morphine biosynthesis. Its function is as follows. NADPH-dependent codeinone reductase involved in biosynthesis of morphinan-type benzylisoquinoline and opiate alkaloids natural products. Reduces codeinone to codeine in the penultimate step in morphine biosynthesis. Can use morphinone, hydrocodone and hydromorphone as substrate during reductive reaction with NADPH as cofactor, and morphine and dihydrocodeine as substrate during oxidative reaction with NADP as cofactor. Converts morphinone to morphine, and neomorphinone to neomorphine. Reduces irreversibly neopinone, a spontaneous isomer of codeinone, to neopine; in planta, neopine levels are limited to low levels. The polypeptide is NADPH-dependent codeinone reductase 1-5 (Papaver somniferum (Opium poppy)).